We begin with the raw amino-acid sequence, 252 residues long: Triosephosphate isomerase (252 aa).

10-12 (NWK) serves as a coordination point for substrate. His96 serves as the catalytic Electrophile. Glu168 (proton acceptor) is an active-site residue. Substrate is bound by residues Gly174, Ser214, and 235 to 236 (GG).

Belongs to the triosephosphate isomerase family. In terms of assembly, homodimer.

The protein localises to the cytoplasm. It catalyses the reaction D-glyceraldehyde 3-phosphate = dihydroxyacetone phosphate. The protein operates within carbohydrate biosynthesis; gluconeogenesis. It functions in the pathway carbohydrate degradation; glycolysis; D-glyceraldehyde 3-phosphate from glycerone phosphate: step 1/1. Functionally, involved in the gluconeogenesis. Catalyzes stereospecifically the conversion of dihydroxyacetone phosphate (DHAP) to D-glyceraldehyde-3-phosphate (G3P). The chain is Triosephosphate isomerase from Streptococcus pyogenes serotype M5 (strain Manfredo).